The primary structure comprises 255 residues: 5-oxoprolinase subunit A 2 (255 aa).

The protein belongs to the LamB/PxpA family. In terms of assembly, forms a complex composed of PxpA, PxpB and PxpC.

It carries out the reaction 5-oxo-L-proline + ATP + 2 H2O = L-glutamate + ADP + phosphate + H(+). In terms of biological role, catalyzes the cleavage of 5-oxoproline to form L-glutamate coupled to the hydrolysis of ATP to ADP and inorganic phosphate. The protein is 5-oxoprolinase subunit A 2 of Agrobacterium fabrum (strain C58 / ATCC 33970) (Agrobacterium tumefaciens (strain C58)).